The sequence spans 192 residues: Zinc finger CCHC domain-containing protein 10 (192 aa).

The segment at 43–60 adopts a CCHC-type zinc-finger fold; sequence VRCQKCLEFGHWTYECTG. The disordered stretch occupies residues 89–192; the sequence is QSIGETNVER…DEPPKKKKKK (104 aa). Composition is skewed to low complexity over residues 109–136 and 144–179; these read TSSS…SSSS and SSSS…STDS.

This Homo sapiens (Human) protein is Zinc finger CCHC domain-containing protein 10 (ZCCHC10).